The chain runs to 105 residues: Nitrogen fixation nifHD region GlnB-like protein 1 (105 aa).

This sequence belongs to the P(II) protein family.

Its function is as follows. Could be involved in the regulation of nitrogen fixation. The sequence is that of Nitrogen fixation nifHD region GlnB-like protein 1 (glnBA) from Methanobacterium ivanovii.